The following is a 59-amino-acid chain: Large ribosomal subunit protein uL30 (59 aa).

Belongs to the universal ribosomal protein uL30 family. As to quaternary structure, part of the 50S ribosomal subunit.

The polypeptide is Large ribosomal subunit protein uL30 (Pectobacterium atrosepticum (strain SCRI 1043 / ATCC BAA-672) (Erwinia carotovora subsp. atroseptica)).